Reading from the N-terminus, the 230-residue chain is Orotidine 5'-phosphate decarboxylase (230 aa).

Substrate is bound by residues Asp-10, Lys-32, 59–68, Thr-119, Arg-180, Gln-189, Gly-209, and Arg-210; that span reads DLKYHDIPNT. Catalysis depends on Lys-61, which acts as the Proton donor.

The protein belongs to the OMP decarboxylase family. Type 1 subfamily. Homodimer.

The enzyme catalyses orotidine 5'-phosphate + H(+) = UMP + CO2. The protein operates within pyrimidine metabolism; UMP biosynthesis via de novo pathway; UMP from orotate: step 2/2. Catalyzes the decarboxylation of orotidine 5'-monophosphate (OMP) to uridine 5'-monophosphate (UMP). This is Orotidine 5'-phosphate decarboxylase from Actinobacillus pleuropneumoniae serotype 5b (strain L20).